The following is a 243-amino-acid chain: Pyridoxine 5'-phosphate synthase (243 aa).

Asparagine 9 contacts 3-amino-2-oxopropyl phosphate. 11 to 12 (DH) contributes to the 1-deoxy-D-xylulose 5-phosphate binding site. Arginine 20 serves as a coordination point for 3-amino-2-oxopropyl phosphate. Catalysis depends on histidine 45, which acts as the Proton acceptor. 1-deoxy-D-xylulose 5-phosphate is bound by residues arginine 47 and histidine 52. Glutamate 72 (proton acceptor) is an active-site residue. Position 102 (threonine 102) interacts with 1-deoxy-D-xylulose 5-phosphate. Histidine 193 functions as the Proton donor in the catalytic mechanism. Residues glycine 194 and 215-216 (GH) contribute to the 3-amino-2-oxopropyl phosphate site.

The protein belongs to the PNP synthase family. In terms of assembly, homooctamer; tetramer of dimers.

Its subcellular location is the cytoplasm. It catalyses the reaction 3-amino-2-oxopropyl phosphate + 1-deoxy-D-xylulose 5-phosphate = pyridoxine 5'-phosphate + phosphate + 2 H2O + H(+). The protein operates within cofactor biosynthesis; pyridoxine 5'-phosphate biosynthesis; pyridoxine 5'-phosphate from D-erythrose 4-phosphate: step 5/5. In terms of biological role, catalyzes the complicated ring closure reaction between the two acyclic compounds 1-deoxy-D-xylulose-5-phosphate (DXP) and 3-amino-2-oxopropyl phosphate (1-amino-acetone-3-phosphate or AAP) to form pyridoxine 5'-phosphate (PNP) and inorganic phosphate. The protein is Pyridoxine 5'-phosphate synthase of Shigella boydii serotype 4 (strain Sb227).